The following is a 643-amino-acid chain: Threonine--tRNA ligase (643 aa).

Positions 1–61 (MVAISLPDGS…TTDASVSLIT (61 aa)) constitute a TGS domain. A catalytic region spans residues 243 to 534 (DHRRVGQEMD…LIENCAGRFP (292 aa)). Cys334, His385, and His511 together coordinate Zn(2+).

The protein belongs to the class-II aminoacyl-tRNA synthetase family. As to quaternary structure, homodimer. Zn(2+) is required as a cofactor.

Its subcellular location is the cytoplasm. The catalysed reaction is tRNA(Thr) + L-threonine + ATP = L-threonyl-tRNA(Thr) + AMP + diphosphate + H(+). Its function is as follows. Catalyzes the attachment of threonine to tRNA(Thr) in a two-step reaction: L-threonine is first activated by ATP to form Thr-AMP and then transferred to the acceptor end of tRNA(Thr). Also edits incorrectly charged L-seryl-tRNA(Thr). The sequence is that of Threonine--tRNA ligase from Rhodospirillum rubrum (strain ATCC 11170 / ATH 1.1.1 / DSM 467 / LMG 4362 / NCIMB 8255 / S1).